We begin with the raw amino-acid sequence, 127 residues long: Large ribosomal subunit protein bL17 (127 aa).

Belongs to the bacterial ribosomal protein bL17 family. As to quaternary structure, part of the 50S ribosomal subunit. Contacts protein L32.

This is Large ribosomal subunit protein bL17 from Ligilactobacillus salivarius (strain UCC118) (Lactobacillus salivarius).